A 358-amino-acid chain; its full sequence is tRNA-specific 2-thiouridylase MnmA (358 aa).

Residues 7-14 (AMSGGVDS) and Leu-33 contribute to the ATP site. Cys-101 (nucleophile) is an active-site residue. A disulfide bond links Cys-101 and Cys-197. An ATP-binding site is contributed by Gly-125. Residues 147-149 (KDQ) form an interaction with tRNA region. Cys-197 serves as the catalytic Cysteine persulfide intermediate.

It belongs to the MnmA/TRMU family.

The protein resides in the cytoplasm. The catalysed reaction is S-sulfanyl-L-cysteinyl-[protein] + uridine(34) in tRNA + AH2 + ATP = 2-thiouridine(34) in tRNA + L-cysteinyl-[protein] + A + AMP + diphosphate + H(+). Catalyzes the 2-thiolation of uridine at the wobble position (U34) of tRNA, leading to the formation of s(2)U34. The chain is tRNA-specific 2-thiouridylase MnmA from Rickettsia typhi (strain ATCC VR-144 / Wilmington).